The chain runs to 1358 residues: DNA-directed RNA polymerase subunit beta (1358 aa).

Belongs to the RNA polymerase beta chain family. As to quaternary structure, the RNAP catalytic core consists of 2 alpha, 1 beta, 1 beta' and 1 omega subunit. When a sigma factor is associated with the core the holoenzyme is formed, which can initiate transcription.

It carries out the reaction RNA(n) + a ribonucleoside 5'-triphosphate = RNA(n+1) + diphosphate. Its function is as follows. DNA-dependent RNA polymerase catalyzes the transcription of DNA into RNA using the four ribonucleoside triphosphates as substrates. The polypeptide is DNA-directed RNA polymerase subunit beta (Francisella tularensis subsp. novicida (strain U112)).